A 296-amino-acid polypeptide reads, in one-letter code: 2-dehydropantoate 2-reductase (296 aa).

NADP(+) contacts are provided by residues 7–12, Asn-94, and Ala-120; that span reads GPGAVG. A substrate-binding site is contributed by Asn-94. Residue Lys-175 is the Proton donor of the active site. 4 residues coordinate substrate: Asn-179, Asn-183, Asn-193, and Ser-245. Glu-257 provides a ligand contact to NADP(+).

Belongs to the ketopantoate reductase family.

The protein localises to the cytoplasm. It carries out the reaction (R)-pantoate + NADP(+) = 2-dehydropantoate + NADPH + H(+). Its pathway is cofactor biosynthesis; (R)-pantothenate biosynthesis; (R)-pantoate from 3-methyl-2-oxobutanoate: step 2/2. Catalyzes the NADPH-dependent reduction of ketopantoate into pantoic acid. In Vibrio cholerae serotype O1 (strain ATCC 39315 / El Tor Inaba N16961), this protein is 2-dehydropantoate 2-reductase (panE).